We begin with the raw amino-acid sequence, 548 residues long: 1,3-beta-glucanosyltransferase gel4 (548 aa).

The N-terminal stretch at 1 to 25 (MKFVYAAAGASLVGSALATLPVIEA) is a signal peptide. 2 N-linked (GlcNAc...) asparagine glycosylation sites follow: N51 and N69. C88 and C117 are oxidised to a cystine. (1,3-beta-D-glucosyl)n-binding positions include Y106, 133 to 141 (SAPSESINR), N174, and E175. The active-site Proton donor is E175. Residue N181 is glycosylated (N-linked (GlcNAc...) asparagine). D217 and R222 together coordinate (1,3-beta-D-glucosyl)n. 5 disulfide bridges follow: C231-C364, C249-C280, C386-C437, C395-C461, and C414-C419. Catalysis depends on E277, which acts as the Nucleophile. Y309 is a (1,3-beta-D-glucosyl)n binding site. N-linked (GlcNAc...) asparagine glycosylation occurs at N425. Residue A519 is the site of GPI-like-anchor amidated alanine attachment. Residues 520-548 (SPMAVKVGNWQFGAYIATALFAGVGMLVL) constitute a propeptide, removed in mature form.

Belongs to the glycosyl hydrolase 72 family. Post-translationally, the GPI-like anchor contains a phosphoceramide lipid group.

It localises to the cell membrane. Splits internally a 1,3-beta-glucan molecule and transfers the newly generated reducing end (the donor) to the non-reducing end of another 1,3-beta-glucan molecule (the acceptor) forming a 1,3-beta linkage, resulting in the elongation of 1,3-beta-glucan chains in the cell wall. Involved in cell wall morphogenesis. In Aspergillus fumigatus (strain ATCC MYA-4609 / CBS 101355 / FGSC A1100 / Af293) (Neosartorya fumigata), this protein is 1,3-beta-glucanosyltransferase gel4 (gel4).